We begin with the raw amino-acid sequence, 149 residues long: 3-hydroxyacyl-[acyl-carrier-protein] dehydratase FabZ (149 aa).

Residue His-49 is part of the active site.

The protein belongs to the thioester dehydratase family. FabZ subfamily.

It is found in the cytoplasm. The catalysed reaction is a (3R)-hydroxyacyl-[ACP] = a (2E)-enoyl-[ACP] + H2O. Involved in unsaturated fatty acids biosynthesis. Catalyzes the dehydration of short chain beta-hydroxyacyl-ACPs and long chain saturated and unsaturated beta-hydroxyacyl-ACPs. The polypeptide is 3-hydroxyacyl-[acyl-carrier-protein] dehydratase FabZ (Sulfurimonas denitrificans (strain ATCC 33889 / DSM 1251) (Thiomicrospira denitrificans (strain ATCC 33889 / DSM 1251))).